The sequence spans 202 residues: Ribosome maturation factor RimM (202 aa).

Residues 100 to 195 form the PRC barrel domain; that stretch reads ADEWYPKDLI…YLTLDPPGGL (96 aa).

This sequence belongs to the RimM family. Binds ribosomal protein uS19.

The protein resides in the cytoplasm. An accessory protein needed during the final step in the assembly of 30S ribosomal subunit, possibly for assembly of the head region. Essential for efficient processing of 16S rRNA. May be needed both before and after RbfA during the maturation of 16S rRNA. It has affinity for free ribosomal 30S subunits but not for 70S ribosomes. This Bifidobacterium longum (strain NCC 2705) protein is Ribosome maturation factor RimM.